Here is a 116-residue protein sequence, read N- to C-terminus: uncharacterized protein (116 aa).

It belongs to the BolA/IbaG family.

The protein localises to the mitochondrion. This is an uncharacterized protein from Schizosaccharomyces pombe (strain 972 / ATCC 24843) (Fission yeast).